Consider the following 438-residue polypeptide: Thymidine phosphorylase (438 aa).

This sequence belongs to the thymidine/pyrimidine-nucleoside phosphorylase family. As to quaternary structure, homodimer.

The enzyme catalyses thymidine + phosphate = 2-deoxy-alpha-D-ribose 1-phosphate + thymine. It functions in the pathway pyrimidine metabolism; dTMP biosynthesis via salvage pathway; dTMP from thymine: step 1/2. Its function is as follows. The enzymes which catalyze the reversible phosphorolysis of pyrimidine nucleosides are involved in the degradation of these compounds and in their utilization as carbon and energy sources, or in the rescue of pyrimidine bases for nucleotide synthesis. The protein is Thymidine phosphorylase of Burkholderia orbicola (strain MC0-3).